Reading from the N-terminus, the 216-residue chain is ADP-sugar pyrophosphatase (216 aa).

Met-1 carries the post-translational modification N-acetylmethionine. A phosphoserine mark is found at Ser-3 and Ser-10. Trp-28 is a substrate binding site. Lys-42 is covalently cross-linked (Glycyl lysine isopeptide (Lys-Gly) (interchain with G-Cter in SUMO2)). The residue at position 45 (Thr-45) is a Phosphothreonine. Residues 46–47 and Arg-51 contribute to the substrate site; that span reads WE. Positions 57 to 194 constitute a Nudix hydrolase domain; it reads QTADGVAVIP…EEHLTVDARV (138 aa). Residue Tyr-74 is modified to Phosphotyrosine. Arg-84 lines the substrate pocket. Ala-96 provides a ligand contact to Mg(2+). Positions 97-118 match the Nudix box motif; the sequence is GLIDDGETPEAAALRELEEETG. Leu-98 serves as a coordination point for substrate. Mg(2+) is bound by residues Glu-112 and Glu-116. Asp-133 is a binding site for substrate. Residue Glu-163 coordinates Mg(2+). An N6-acetyllysine mark is found at Lys-207 and Lys-215.

Belongs to the Nudix hydrolase family. As to quaternary structure, homodimer. Interacts with PARG. It depends on Mg(2+) as a cofactor. Phosphorylation at Thr-45 is required for homodimer stability; dephosphorylation results in destabilization of the homodimer. Dephosphorylation at Thr-45 promotes the ATP-synthesis activity.

It localises to the nucleus. It catalyses the reaction D-ribose 5-phosphate + ATP + H(+) = ADP-D-ribose + diphosphate. The catalysed reaction is ADP-D-ribose + H2O = D-ribose 5-phosphate + AMP + 2 H(+). The enzyme catalyses 8-oxo-dGDP + H2O = 8-oxo-dGMP + phosphate + H(+). Functionally, enzyme that can either act as an ADP-sugar pyrophosphatase in absence of diphosphate or catalyze the synthesis of ATP in presence of diphosphate. In absence of diphosphate, hydrolyzes with similar activities various modified nucleoside diphosphates such as ADP-ribose, ADP-mannose, ADP-glucose, 8-oxo-GDP and 8-oxo-dGDP. Can also hydrolyze other nucleotide sugars with low activity. In presence of diphosphate, mediates the synthesis of ATP in the nucleus by catalyzing the conversion of ADP-ribose to ATP and ribose 5-phosphate. Nuclear ATP synthesis takes place when dephosphorylated at Thr-45. Nuclear ATP generation is required for extensive chromatin remodeling events that are energy-consuming. Does not play a role in U8 snoRNA decapping activity. Binds U8 snoRNA. The polypeptide is ADP-sugar pyrophosphatase (Pongo abelii (Sumatran orangutan)).